The chain runs to 371 residues: Histidinol-phosphate aminotransferase (371 aa).

Lys228 bears the N6-(pyridoxal phosphate)lysine mark.

The protein belongs to the class-II pyridoxal-phosphate-dependent aminotransferase family. Histidinol-phosphate aminotransferase subfamily. Pyridoxal 5'-phosphate is required as a cofactor.

It catalyses the reaction L-histidinol phosphate + 2-oxoglutarate = 3-(imidazol-4-yl)-2-oxopropyl phosphate + L-glutamate. It participates in amino-acid biosynthesis; L-histidine biosynthesis; L-histidine from 5-phospho-alpha-D-ribose 1-diphosphate: step 7/9. The polypeptide is Histidinol-phosphate aminotransferase (Methanococcus maripaludis (strain C5 / ATCC BAA-1333)).